We begin with the raw amino-acid sequence, 278 residues long: MLTLNYIDPIAFELGPISVRWYGIIIAAGILLGYFIAQASVKKIGYDQDTLVDIIFWSAIFGFIVARIYFVIFQWPYYIQNPIEIPMIWHGGIAIHGGLIGGFVTGIIICKQKNINPFQIGDVIAPSMILGQGIGRWGNFMNHEAHGGPISRSVLENLHIPNFIIDNMYIDGKYYQPTFLYESLWDILGFVILILLRKHLRVGDTFCLYLIWYSIGRFFVEGMRTDSLMLTSDIRVAQLMSIILILIGVIIMIIRRVKYRSPRYKDVGPLSWPNPKVK.

3 helical membrane-spanning segments follow: residues 21 to 41 (WYGIIIAAGILLGYFIAQASV), 54 to 74 (IIFWSAIFGFIVARIYFVIFQ), and 88 to 108 (IWHGGIAIHGGLIGGFVTGII). Arg136 provides a ligand contact to a 1,2-diacyl-sn-glycero-3-phospho-(1'-sn-glycerol). The next 2 membrane-spanning stretches (helical) occupy residues 176–196 (QPTFLYESLWDILGFVILILL) and 234–254 (IRVAQLMSIILILIGVIIMII).

Belongs to the Lgt family.

The protein resides in the cell membrane. The enzyme catalyses L-cysteinyl-[prolipoprotein] + a 1,2-diacyl-sn-glycero-3-phospho-(1'-sn-glycerol) = an S-1,2-diacyl-sn-glyceryl-L-cysteinyl-[prolipoprotein] + sn-glycerol 1-phosphate + H(+). The protein operates within protein modification; lipoprotein biosynthesis (diacylglyceryl transfer). Catalyzes the transfer of the diacylglyceryl group from phosphatidylglycerol to the sulfhydryl group of the N-terminal cysteine of a prolipoprotein, the first step in the formation of mature lipoproteins. This chain is Phosphatidylglycerol--prolipoprotein diacylglyceryl transferase, found in Staphylococcus xylosus.